Consider the following 184-residue polypeptide: Large ribosomal subunit protein uL5 (184 aa).

Belongs to the universal ribosomal protein uL5 family. Component of the large ribosomal subunit. Interacts with Fmr1 to form the RNA-induced silencing complex (RISC), a ribonucleoprotein (RNP) complex involved in translation regulation, other components of the complex are RpL5, Rm62, AGO2 and Dcr-1.

It is found in the nucleus. Its subcellular location is the cytoplasm. Functionally, component of the ribosome, a large ribonucleoprotein complex responsible for the synthesis of proteins in the cell. The small ribosomal subunit (SSU) binds messenger RNAs (mRNAs) and translates the encoded message by selecting cognate aminoacyl-transfer RNA (tRNA) molecules. The large subunit (LSU) contains the ribosomal catalytic site termed the peptidyl transferase center (PTC), which catalyzes the formation of peptide bonds, thereby polymerizing the amino acids delivered by tRNAs into a polypeptide chain. The nascent polypeptides leave the ribosome through a tunnel in the LSU and interact with protein factors that function in enzymatic processing, targeting, and the membrane insertion of nascent chains at the exit of the ribosomal tunnel. The polypeptide is Large ribosomal subunit protein uL5 (RpL11) (Drosophila melanogaster (Fruit fly)).